The chain runs to 917 residues: Probable dipeptidyl-aminopeptidase B (917 aa).

A disordered region spans residues 1–75; the sequence is MTVGRRLNDE…KYRDDVEEDW (75 aa). At 1 to 93 the chain is on the cytoplasmic side; that stretch reads MTVGRRLNDE…NAKPSQRRTQ (93 aa). Positions 27 to 39 are enriched in low complexity; that stretch reads DSSSTASVSLTLV. Positions 40–49 are enriched in polar residues; it reads DGTNHTTAKP. A compositionally biased stretch (basic and acidic residues) spans 57–69; sequence VSRDRYADEKYRD. Residues 94–114 traverse the membrane as a helical; Signal-anchor for type II membrane protein segment; that stretch reads IVFWLLVALCVGGWAVAFLFF. At 115-917 the chain is on the vacuolar side; sequence VTSPGNTIST…KRVIRRLLHR (803 aa). Residues 124 to 133 are compositionally biased toward polar residues; the sequence is TTPDTGSGSP. The tract at residues 124–150 is disordered; that stretch reads TTPDTGSGSPDSDVIKPGSPPAGKKIP. N-linked (GlcNAc...) asparagine glycans are attached at residues N206, N302, and N354. S759 acts as the Charge relay system in catalysis. N818 carries N-linked (GlcNAc...) asparagine glycosylation. Residues D836 and H869 each act as charge relay system in the active site.

This sequence belongs to the peptidase S9B family.

The protein localises to the vacuole membrane. The catalysed reaction is Release of an N-terminal dipeptide, Xaa-Yaa-|-Zaa-, from a polypeptide, preferentially when Yaa is Pro, provided Zaa is neither Pro nor hydroxyproline.. Type IV dipeptidyl-peptidase which removes N-terminal dipeptides sequentially from polypeptides having unsubstituted N-termini provided that the penultimate residue is proline. The chain is Probable dipeptidyl-aminopeptidase B (DAPB) from Arthroderma gypseum (strain ATCC MYA-4604 / CBS 118893) (Microsporum gypseum).